Here is a 161-residue protein sequence, read N- to C-terminus: MPSFDVVSEANMIEVKNAVEQSNKEISTRFDFKGSDARVEQKERELTLYADDDFKLGQVKDVLIGKLAKRNVDVRFLDYGKIEKIGGDKVKQVATIKKGVSGDLAKKVVRIVKDSKIKVQASIQGDAVRVSGAKRDDLQSVIALLRKEVTDTPLDFNNFRD.

This sequence belongs to the YajQ family.

Functionally, nucleotide-binding protein. This Burkholderia thailandensis (strain ATCC 700388 / DSM 13276 / CCUG 48851 / CIP 106301 / E264) protein is Nucleotide-binding protein BTH_I0730.